Consider the following 218-residue polypeptide: Octanoyltransferase (218 aa).

The region spanning 27 to 210 is the BPL/LPL catalytic domain; that stretch reads AGAEETLYLL…QFRAIFADST (184 aa). Substrate contacts are provided by residues 72–79, 139–141, and 152–154; these read RGGNITCH, SIG, and GFA. The Acyl-thioester intermediate role is filled by cysteine 170.

It belongs to the LipB family.

The protein localises to the cytoplasm. It catalyses the reaction octanoyl-[ACP] + L-lysyl-[protein] = N(6)-octanoyl-L-lysyl-[protein] + holo-[ACP] + H(+). It participates in protein modification; protein lipoylation via endogenous pathway; protein N(6)-(lipoyl)lysine from octanoyl-[acyl-carrier-protein]: step 1/2. In terms of biological role, catalyzes the transfer of endogenously produced octanoic acid from octanoyl-acyl-carrier-protein onto the lipoyl domains of lipoate-dependent enzymes. Lipoyl-ACP can also act as a substrate although octanoyl-ACP is likely to be the physiological substrate. This chain is Octanoyltransferase, found in Nitratidesulfovibrio vulgaris (strain DSM 19637 / Miyazaki F) (Desulfovibrio vulgaris).